We begin with the raw amino-acid sequence, 156 residues long: Lipoprotein signal peptidase (156 aa).

3 helical membrane-spanning segments follow: residues 5–25, 64–84, and 89–109; these read FKFI…DQWV, YLHL…RTLL, and IAFG…FIHG. Catalysis depends on residues Asp113 and Asp130. A helical membrane pass occupies residues 122–142; it reads NFAIFNVADVMINISVALILI.

It belongs to the peptidase A8 family.

It is found in the cell inner membrane. It catalyses the reaction Release of signal peptides from bacterial membrane prolipoproteins. Hydrolyzes -Xaa-Yaa-Zaa-|-(S,diacylglyceryl)Cys-, in which Xaa is hydrophobic (preferably Leu), and Yaa (Ala or Ser) and Zaa (Gly or Ala) have small, neutral side chains.. It participates in protein modification; lipoprotein biosynthesis (signal peptide cleavage). Functionally, this protein specifically catalyzes the removal of signal peptides from prolipoproteins. In Campylobacter jejuni subsp. jejuni serotype O:2 (strain ATCC 700819 / NCTC 11168), this protein is Lipoprotein signal peptidase.